Reading from the N-terminus, the 302-residue chain is Protoheme IX farnesyltransferase 1 (302 aa).

The next 8 helical transmembrane spans lie at 27-47 (VVALMLVTAIVGMSLAPVTDF), 49-69 (WIQASIGLIGIGLMAGSAAAF), 98-118 (SVAIFAVAIGVVGFVLLYAWV), 121-141 (LTAWMTFLSLLGYAVVYTMYL), 149-169 (IVIAGIAGAMPPLLGWTAVTG), 175-195 (AWLLVMIIFIWTPPHFWALAI), 228-248 (LLTLVCVMPVLVGMVGFIYLF), and 281-301 (IYHLLALFVALLADHYIGMVL).

Belongs to the UbiA prenyltransferase family. Protoheme IX farnesyltransferase subfamily.

It localises to the cell inner membrane. It catalyses the reaction heme b + (2E,6E)-farnesyl diphosphate + H2O = Fe(II)-heme o + diphosphate. It functions in the pathway porphyrin-containing compound metabolism; heme O biosynthesis; heme O from protoheme: step 1/1. Functionally, converts heme B (protoheme IX) to heme O by substitution of the vinyl group on carbon 2 of heme B porphyrin ring with a hydroxyethyl farnesyl side group. This Vibrio parahaemolyticus serotype O3:K6 (strain RIMD 2210633) protein is Protoheme IX farnesyltransferase 1.